The primary structure comprises 261 residues: MSESLHLTRNGSILEITLDRPKANAIDAKTSFEMGEVFLNFRDDPQLRVAIITGAGEKFFSAGWDLKAAAEGEAPDADFGPGGFAGLTEIFNLDKPVIAAVNGYAFGGGFELALAADFIVCADNASFALPEAKLGIVPDSGGVLRLPKILPPAIVNEMVMTGRRMGAEEALRWGIVNRVVSQAELMDNARELAQQLVNSAPLAIAALKEIYRTTSEMPVEESYSYIRSGVLKHYPSVLHSEDAIEGPLAFAEKRDPVWKGR.

Glu111 functions as the Nucleophile in the catalytic mechanism. Residue Glu131 is the Proton acceptor of the active site.

The protein belongs to the enoyl-CoA hydratase/isomerase family.

The enzyme catalyses (R)-carnitinyl-CoA = crotonobetainyl-CoA + H2O. Its pathway is amine and polyamine metabolism; carnitine metabolism. Its function is as follows. Catalyzes the reversible dehydration of L-carnitinyl-CoA to crotonobetainyl-CoA. The chain is Carnitinyl-CoA dehydratase from Escherichia coli O157:H7.